The following is a 140-amino-acid chain: Putative pre-16S rRNA nuclease (140 aa).

The protein belongs to the YqgF nuclease family.

It is found in the cytoplasm. Could be a nuclease involved in processing of the 5'-end of pre-16S rRNA. The chain is Putative pre-16S rRNA nuclease from Actinobacillus succinogenes (strain ATCC 55618 / DSM 22257 / CCUG 43843 / 130Z).